The primary structure comprises 1101 residues: Helicase POLQ-like (1101 aa).

The segment at 212 to 261 is disordered; the sequence is DLGDHSMKERDWKSSSHNTVNEELPHNCIEQPQQNDESSSKVRTSSDMNR. The segment covering 213 to 225 has biased composition (basic and acidic residues); it reads LGDHSMKERDWKS. Residues 241–258 are compositionally biased toward polar residues; that stretch reads EQPQQNDESSSKVRTSSD. The Helicase ATP-binding domain maps to 346–518; the sequence is LNSVQERKNL…FLQAEYYTSQ (173 aa). 359–366 provides a ligand contact to ATP; sequence LPTSGGKT. Residues 463–466 carry the DEAH box motif; sequence DELH. The Helicase C-terminal domain maps to 566–758; sequence HLVALVTEVI…EFTKGIQTLF (193 aa).

This sequence belongs to the helicase family. SKI2 subfamily. As to quaternary structure, homodimer. Interacts with POLN. Interacts with RAD51B and RAD51C; promoting association with the BCDX2 complex. Interacts with the replication protein A (RPA/RP-A) complex. Interacts with RAD51; stimulating HELQ DNA helicase activity and ability to unwing DNA.

It is found in the nucleus. The protein resides in the chromosome. The catalysed reaction is Couples ATP hydrolysis with the unwinding of duplex DNA by translocating in the 3'-5' direction.. The enzyme catalyses ATP + H2O = ADP + phosphate + H(+). ATPase activity is strongly stimulated by single-stranded DNA. Presence of ATP and Mg cofactor are required for helicase activity allowing to unwind duplex oligonucleotides up to 60-70-mer. This helicase activity is stimulated by replication protein A (RPA/RP-A) complex that binds to unwound regions and inhibits re-annealing. Functionally, single-stranded 3'-5' DNA helicase that plays a key role in homology-driven double-strand break (DSB) repair. Involved in different DSB repair mechanisms that are guided by annealing of extensive stretches of complementary bases at break ends, such as microhomology-mediated end-joining (MMEJ), single-strand annealing (SSA) or synthesis-dependent strand annealing (SDSA). Possesses both DNA unwinding and annealing activities. Forms a complex with RAD51, stimulating HELQ DNA helicase activity and ability to unwing DNA. Efficiently unwinds substrates containing 3' overhangs or a D-loop. In contrast, interaction with the replication protein A (RPA/RP-A) complex inhibits DNA unwinding by HELQ but strongly stimulates DNA strand annealing. Triggers displacement of RPA from single-stranded DNA to facilitate annealing of complementary sequences. This Homo sapiens (Human) protein is Helicase POLQ-like.